A 392-amino-acid chain; its full sequence is uncharacterized protein (392 aa).

Positions M1–G19 are cleaved as a signal peptide. The N-palmitoyl cysteine moiety is linked to residue C20. A lipid anchor (S-diacylglycerol cysteine) is attached at C20. Positions S148–E173 are disordered. Gly residues predominate over residues S151–G160.

Belongs to the TP013X lipoprotein family.

The protein localises to the cell membrane. This is an uncharacterized protein from Treponema pallidum (strain Nichols).